The sequence spans 70 residues: ATP synthase subunit c (70 aa).

Helical transmembrane passes span 5–25 (AAGI…AIIV) and 47–67 (FIGV…SFIL).

Belongs to the ATPase C chain family. F-type ATPases have 2 components, F(1) - the catalytic core - and F(0) - the membrane proton channel. F(1) has five subunits: alpha(3), beta(3), gamma(1), delta(1), epsilon(1). F(0) has three main subunits: a(1), b(2) and c(10-14). The alpha and beta chains form an alternating ring which encloses part of the gamma chain. F(1) is attached to F(0) by a central stalk formed by the gamma and epsilon chains, while a peripheral stalk is formed by the delta and b chains.

The protein localises to the cell membrane. F(1)F(0) ATP synthase produces ATP from ADP in the presence of a proton or sodium gradient. F-type ATPases consist of two structural domains, F(1) containing the extramembraneous catalytic core and F(0) containing the membrane proton channel, linked together by a central stalk and a peripheral stalk. During catalysis, ATP synthesis in the catalytic domain of F(1) is coupled via a rotary mechanism of the central stalk subunits to proton translocation. In terms of biological role, key component of the F(0) channel; it plays a direct role in translocation across the membrane. A homomeric c-ring of between 10-14 subunits forms the central stalk rotor element with the F(1) delta and epsilon subunits. The sequence is that of ATP synthase subunit c from Halalkalibacterium halodurans (strain ATCC BAA-125 / DSM 18197 / FERM 7344 / JCM 9153 / C-125) (Bacillus halodurans).